The sequence spans 47 residues: MLPSKRVPFLFTIILFLAGLGQHTTESVLPDCVLYPRCLITKDPCCM.

The signal sequence occupies residues 1–21 (MLPSKRVPFLFTIILFLAGLG).

As to expression, main cells of accessory gland and seminal fluid.

Its subcellular location is the secreted. In terms of biological role, responsible for physiological and behavioral changes in mated female flies. This Drosophila melanogaster (Fruit fly) protein is Accessory gland peptide Acp33A (Acp33A).